Consider the following 239-residue polypeptide: Norbelladine 4'-O-methyltransferase 4 (239 aa).

S-adenosyl-L-methionine contacts are provided by residues Val-55, Glu-77, Gly-79–Val-80, Ser-85, Asp-103, and Ala-132. Asp-155 contacts a divalent metal cation. Residue Asp-157 participates in S-adenosyl-L-methionine binding. A divalent metal cation contacts are provided by Asp-181 and Asn-182.

It belongs to the class I-like SAM-binding methyltransferase superfamily. Cation-dependent O-methyltransferase family. Mg(2+) serves as cofactor.

The enzyme catalyses norbelladine + S-adenosyl-L-methionine = 4'-O-methylnorbelladine + S-adenosyl-L-homocysteine + H(+). The protein operates within alkaloid biosynthesis. Functionally, 4'-O-methyltransferase converting norbelladine to 4'-O-methylnorbelladine. 4'-O-methylnorbelladine is a precursor to all Amaryllidaceae alkaloids such as galanthamine, lycorine and haemanthamine, and including haemanthamine- and crinamine-type alkaloids, promising anticancer agents. This Narcissus aff. pseudonarcissus MK-2014 (Daffodil) protein is Norbelladine 4'-O-methyltransferase 4.